Here is a 353-residue protein sequence, read N- to C-terminus: Inactive ADP-ribosyltransferase ARH2 (353 aa).

At serine 27 the chain carries Phosphoserine.

Belongs to the ADP-ribosylglycohydrolase family.

The protein localises to the cytoplasm. The protein resides in the myofibril. It is found in the sarcomere. Functionally, required for myofibril assembly and outgrowth of the cardiac chambers in the developing heart. Appears to be catalytically inactive, showing no activity against O-acetyl-ADP-ribose. The protein is Inactive ADP-ribosyltransferase ARH2 (Adprhl1) of Rattus norvegicus (Rat).